The following is a 91-amino-acid chain: Mercuric transport protein periplasmic component (91 aa).

The signal sequence occupies residues 1 to 19 (MKKLLSALALAAVVAPVWA). Positions 22–88 (QTVTLSVPGM…ATEDAGYPSS (67 aa)) constitute an HMA domain. Hg(2+)-binding residues include cysteine 33 and cysteine 36.

The protein belongs to the MerP family. As to quaternary structure, monomer.

The protein resides in the periplasm. In terms of biological role, involved in mercury resistance. Acts as a mercury scavenger that specifically binds to a mercuric ion in the periplasm and probably passes it to the cytoplasmic mercuric reductase MerA via the mercuric transport protein MerT. The chain is Mercuric transport protein periplasmic component from Pseudomonas fluorescens.